We begin with the raw amino-acid sequence, 266 residues long: METLKSNKARLEYLINDMHRERNDNDVLVMPSSFEDLWELYRGLANVRPALPVSDEYLAVQDAMLSDLNRQHVTDLKDLKPIKGDNIFVWQGDITTLKIDAIVNAANSRFLGCMQANHDCIDNIIHTKAGVQVRLDCAEIIRQQGRNEGVGKAKITRGYNLPAKYIIHTVGPQIRRLPVSKMNQDLLAKCYLSCLKLADQHSLNHVAFCCISTGVFAFPQDEAAEIAVRTVESYLKETNSTLKVVFNVFTDKDLQLYKEAFNRDAE.

The 192-residue stretch at 74 to 265 folds into the Macro domain; that stretch reads TDLKDLKPIK…LYKEAFNRDA (192 aa). ADP-D-ribose is bound by residues Asp93, Ile94, and Asn107. 3 residues coordinate Zn(2+): Cys113, His118, and Cys120. 7 residues coordinate ADP-D-ribose: Cys120, Ile121, Asp122, Ser212, Thr213, Gly214, and Phe216.

Belongs to the MacroD-type family. Zn-Macro subfamily. Requires Zn(2+) as cofactor.

It catalyses the reaction 4-O-(ADP-D-ribosyl)-L-aspartyl-[protein] + H2O = L-aspartyl-[protein] + ADP-D-ribose + H(+). Its function is as follows. ADP-ribosylhydrolase that specifically reverses the SirTM-mediated mono-ADP-ribosylation at an asparatate residue of GcvH-L, by releasing ADP-ribose from the target protein. May play a role in the regulation of the response to host-induced oxidative stress. In Staphylococcus aureus (strain MSSA476), this protein is Protein-ADP-ribose hydrolase.